Reading from the N-terminus, the 172-residue chain is MAKMQAKVQADERDDGLREKMISVNRVTKVVKGGRILGFAALTVVGDGDGRIGMGKGKAKEVPVAVQKAMEQARRNMFKVPLKNGTLQHEVHGKHGASAVLLAPAKAGTGVIAGGPMRAVFDVMGVQNVVAKSHGSTNPYNLVRATLDGLRKQSTPADIAAKRGKSVEEILG.

Positions 17–80 constitute an S5 DRBM domain; that stretch reads LREKMISVNR…EQARRNMFKV (64 aa).

This sequence belongs to the universal ribosomal protein uS5 family. As to quaternary structure, part of the 30S ribosomal subunit. Contacts proteins S4 and S8.

Functionally, with S4 and S12 plays an important role in translational accuracy. In terms of biological role, located at the back of the 30S subunit body where it stabilizes the conformation of the head with respect to the body. This chain is Small ribosomal subunit protein uS5, found in Burkholderia lata (strain ATCC 17760 / DSM 23089 / LMG 22485 / NCIMB 9086 / R18194 / 383).